The sequence spans 311 residues: Fluoride export protein 1 (311 aa).

Over 1-6 (MLLTQS) the chain is Cytoplasmic. A helical transmembrane segment spans residues 7-25 (YFCIMSMLGTLARLGLTAL). The Extracellular segment spans residues 26–29 (NTYP). Residues 30–50 (GAPFSGLLWVQFVGCVIMGFC) form a helical membrane-spanning segment. The Cytoplasmic segment spans residues 51–65 (QTESVFFPRPKHNAT). Residues 66–86 (FLLAITTGFCGSLTTFSSWML) traverse the membrane as a helical segment. Residues 87-106 (QMFTGMANLDPFERRGRGYS) are Extracellular-facing. Residues 107–127 (FLSVVSDFMVTMCIAMSSLIW) traverse the membrane as a helical segment. Residues 128 to 154 (GKQIGKTTGQWRIGKVAFAWPIPAHTH) lie on the Cytoplasmic side of the membrane. A helical membrane pass occupies residues 155–175 (IVVRVLLLLLSICFFVGAAFY). Topologically, residues 176-186 (TAYTTNVTHRG) are extracellular. Asparagine 181 is a glycosylation site (N-linked (GlcNAc...) asparagine). A helical membrane pass occupies residues 187 to 207 (IGFSLIFSPFAALTRLYLARF). At 208-212 (LNSPQ) the chain is on the cytoplasmic side. Residues 213-233 (YFIPYGTLCANVFATLLLSIM) traverse the membrane as a helical segment. Residues 234-250 (YMIPQITHCTPVSRSVM) are Extracellular-facing. The chain crosses the membrane as a helical span at residues 251 to 268 (YGIQNGFCAVLSTLSTFS). At 269–278 (NELHTMPIKR) the chain is on the cytoplasmic side. A helical membrane pass occupies residues 279 to 299 (AYIYCIISVAISFSICVIVDG). The Extracellular portion of the chain corresponds to 300-311 (ATAWGHGYTEKY).

Belongs to the fluoride channel Fluc/FEX (TC 1.A.43) family.

It localises to the cell membrane. It catalyses the reaction fluoride(in) = fluoride(out). Functionally, fluoride channel required for the rapid expulsion of cytoplasmic fluoride. In Schizosaccharomyces pombe (strain 972 / ATCC 24843) (Fission yeast), this protein is Fluoride export protein 1 (fex1).